The following is a 306-amino-acid chain: UDP-N-acetylenolpyruvoylglucosamine reductase (306 aa).

The FAD-binding PCMH-type domain occupies 30–216; the sequence is RIGGPVPYIL…KSKLIDFSTR (187 aa). The active site involves R180. The Proton donor role is filled by S230. E301 is an active-site residue.

It belongs to the MurB family. FAD serves as cofactor.

The protein localises to the cytoplasm. It catalyses the reaction UDP-N-acetyl-alpha-D-muramate + NADP(+) = UDP-N-acetyl-3-O-(1-carboxyvinyl)-alpha-D-glucosamine + NADPH + H(+). The protein operates within cell wall biogenesis; peptidoglycan biosynthesis. In terms of biological role, cell wall formation. The sequence is that of UDP-N-acetylenolpyruvoylglucosamine reductase from Petrotoga mobilis (strain DSM 10674 / SJ95).